The primary structure comprises 191 residues: Potassium-transporting ATPase KdpC subunit (191 aa).

A helical transmembrane segment spans residues 6–26 (PALVLFILLTLLTGGVYPLLT).

The protein belongs to the KdpC family. In terms of assembly, the system is composed of three essential subunits: KdpA, KdpB and KdpC.

It localises to the cell inner membrane. Functionally, part of the high-affinity ATP-driven potassium transport (or Kdp) system, which catalyzes the hydrolysis of ATP coupled with the electrogenic transport of potassium into the cytoplasm. This subunit acts as a catalytic chaperone that increases the ATP-binding affinity of the ATP-hydrolyzing subunit KdpB by the formation of a transient KdpB/KdpC/ATP ternary complex. The sequence is that of Potassium-transporting ATPase KdpC subunit from Klebsiella pneumoniae (strain 342).